Here is a 1831-residue protein sequence, read N- to C-terminus: MVPSIHKTSNRYRTIYFFLISLLITSTFADQQAWPLPEEVSASQLHEIPVLHTAFVQIGEELHYLNHPIRPENVHQLPVYDSIKGVCEGNCPKEANKNHATKTFNVLKLSGKGKLPMEMDPPMMDFGQNSVGTAQKRKIYIRNMRNEQIFLDAVVVNSIEFQASYFEQYKLEPHGVTSLEVVFLPREIGKRSTIVHFYTSVGVFTYKMQGNCDSNPYRISPFTGYRLPMNSSISKPIVIFNPYAYTMRITEIGTSGGNAHIELPHEVDSKLAEEPLQYWDIRPYQSKQIATLVLVGATSENSTVFVRIGSEIYLSSEHRKPNTDIYLTVPIEVLKRRGVYATDEILDFGLIRQGMKSEAKVFSVVQYQIGGRLEFETLYVEKGDHTAIYMEFASHPPIIVYPPTKGSVTLGPKADLVKVYLEGNRVQMSPQQQMKHISGHIIAVSRGGNYNVSIPYRADVFRGDLLPIGNDLSIQEDLRPPHQRIIRIENQLPFDVAIFNITLAPELVSHFSVRLIDRTALIRSGHISPVFVLKYNKKLPPTFDNSTIYLHTNVSTFNLSLSTYTGRMNVELISVDKNSFDFGFVERNDTRTIRFVVWNHNRAEMRLKNLAVPHRSAYRLYEVGVKSIGNFSDVRNDERLEYVEATDVDIPPMKGKIFDLELKVPSDGVVRNGNIIFETDLESKIFGVTYQVSTGSLQSIPEEICFGQTFPSKLVYRTLQVFNSFDEDMTVTRLTTLNEDPRFFFEGFDPKNPPVLRSGRLTNLGRVMFSPSAPCEHDYCYLGLPLGSSDGAWFTHGLTLPSNLPEIDSYLYKQLRKKYDALVNSGKHHINTTIILDTDKAKNIKIKTSAELVWPRLLTRNSIHFPLTALGNFTIVNLTLANPTNVPVAIQVIPLVIYPDAESLVELMRPNLVSELTDHVEMNETLMFSLRDTELFTLKSDSPVPKLREAFEYHLNHEMPRYNNEINIPRFTLSMILKPHMKIRLRLGFLPSDYTLRSSLLLIRNNLTAIEPVVMYGKGARIGVKVEGAEARSKKPLLFEIRHDHLTDCNNPKRLMHKLHSTLTVRRPFQVMNSGEVQFTVTNMSINGVPCENRGFRILNCYPFRLQPNETYALDIAYTPDFLTTTNEADLQLYMHMNGSAWIFPLASTVPGDMLAKCHQALPRPPFENIMYYSCVTALIFCLVCVLACAYLEGDRAIAVAIRQQFAIPRHVFDLNNLNKNNSTTTPVPTVPSTAKPESSIKKPTPATRPSTLRASSDAWLISRLLIGLANFIVKCVHLFWKWSLFWRREKADDKQSKSAKVTKKKNPVTMQKVEEFRQMLEYVGQQKRQQNSGELAPEFDEVEEEELAEMWAQRKDSGAQSSVVTDPEPPMSKSQRKKKRAAQQKENNNLEAPIIVQPVVQSPPVQNKMEPAKKTTPGPSPKPKGNNQRKKHVQVPPVTKTPVTPKTSIPPPTEPEKPIKPSEQKKPNAIPVERPKQPTPSKARTPSKTPSQSNRAQHPASSPAPIAPTSAPTDDFVHVPPTSLTSPDLFYRQFLSSMGMPMDAGMWDTPAAQAAMPFMNLWNYGGPLSAEQMEDLIRQASGVAPITNDSEGTTVTTPSDIGMTWGTSGHLGGDEESIGGEAAPDWIDEDVNVDDAEMDFSSMSAASKDIFKDDDIDNFNQQMKRQRSPSQASSTLSRKLENSPQKMGSRRLTIGSEKKNNQSSSSALNPNYDFTRTPGNPNRMQMSQNSIQPAPPATSIWGDNSNSDPWGTNTVSNPLSELEDDPLSLSHLGINLASTESSATGPMFTMFSGPEFNLWSSSSLFHPPTQQPSTSQMPQDTDNENDEKNN.

An N-terminal signal peptide occupies residues 1–29 (MVPSIHKTSNRYRTIYFFLISLLITSTFA). Topologically, residues 30–1169 (DQQAWPLPEE…QALPRPPFEN (1140 aa)) are lumenal. A papD-L domain region spans residues 118 to 294 (EMDPPMMDFG…QSKQIATLVL (177 aa)). Residues 1170–1190 (IMYYSCVTALIFCLVCVLACA) traverse the membrane as a helical segment. The Cytoplasmic portion of the chain corresponds to 1191 to 1831 (YLEGDRAIAV…TDNENDEKNN (641 aa)). Residues 1223–1234 (STTTPVPTVPST) are compositionally biased toward low complexity. Disordered stretches follow at residues 1223–1252 (STTTPVPTVPSTAKPESSIKKPTPATRPST), 1325–1516 (GQQK…PTDD), 1663–1759 (QMKR…VSNP), and 1800–1831 (WSSSSLFHPPTQQPSTSQMPQDTDNENDEKNN). Over residues 1338–1349 (PEFDEVEEEELA) the composition is skewed to acidic residues. Low complexity-rich tracts occupy residues 1394–1407 (PIIVQPVVQSPPVQ) and 1435–1448 (QVPPVTKTPVTPKT). Basic and acidic residues predominate over residues 1455 to 1467 (EPEKPIKPSEQKK). A compositionally biased stretch (polar residues) spans 1480-1497 (TPSKARTPSKTPSQSNRA). Residues 1500-1514 (PASSPAPIAPTSAPT) are compositionally biased toward low complexity. Polar residues-rich tracts occupy residues 1669–1687 (SPSQASSTLSRKLENSPQK), 1702–1733 (NQSSSSALNPNYDFTRTPGNPNRMQMSQNSIQ), and 1742–1758 (WGDNSNSDPWGTNTVSN). The span at 1808-1820 (PPTQQPSTSQMPQ) shows a compositional bias: low complexity. Positions 1822-1831 (TDNENDEKNN) are enriched in acidic residues.

Belongs to the TMEM131 family. As to quaternary structure, may interact (via PapD-L domain) with collagen proteins (via C-terminus); the interaction is direct and is involved in assembly and secretion of collagen. As to expression, predominantly expressed in the intestine and hypodermis.

It localises to the membrane. The protein resides in the endoplasmic reticulum membrane. In terms of biological role, collagen binding transmembrane protein involved in collagen secretion, probably by recruiting the ER-to-Golgi transport complex TRAPPIII. Required for normal development. The chain is Transmembrane protein 131 homolog from Caenorhabditis elegans.